The primary structure comprises 513 residues: GMP synthase [glutamine-hydrolyzing] (513 aa).

Residues 9–198 (LILVLDFGSQ…VRRVCNCTGE (190 aa)) enclose the Glutamine amidotransferase type-1 domain. Catalysis depends on Cys86, which acts as the Nucleophile. Catalysis depends on residues His172 and Glu174. Residues 199 to 388 (WTMENFIEIE…LGIPEHLVWR (190 aa)) form the GMPS ATP-PPase domain. 226–232 (SGGVDSS) contacts ATP.

In terms of assembly, homodimer.

The enzyme catalyses XMP + L-glutamine + ATP + H2O = GMP + L-glutamate + AMP + diphosphate + 2 H(+). Its pathway is purine metabolism; GMP biosynthesis; GMP from XMP (L-Gln route): step 1/1. Functionally, catalyzes the synthesis of GMP from XMP. In Staphylococcus epidermidis (strain ATCC 12228 / FDA PCI 1200), this protein is GMP synthase [glutamine-hydrolyzing].